The following is a 1014-amino-acid chain: C2 domain-containing protein 5 (1014 aa).

The region spanning 1–109 (MPGKLKVKIV…EAATVISGWF (109 aa)) is the C2 domain. Ca(2+)-binding residues include D19, D26, D76, D78, S81, and D84. Disordered stretches follow at residues 274–328 (LNPN…GRDG), 639–669 (ETVG…AELD), 801–878 (ALQV…HRGG), and 992–1014 (EAGP…DSAT). A compositionally biased stretch (polar residues) spans 275–292 (NPNTHSSGPSTPLKNQTY). Over residues 293–318 (SFSPSKSFSRQSSSSDTDLSLTPKTG) the composition is skewed to low complexity. Over residues 319 to 328 (MGSGSAGRDG) the composition is skewed to gly residues. A compositionally biased stretch (polar residues) spans 830-840 (SSDSPGPSTFS). The span at 993–1006 (AGPGQPTAPGPQSA) shows a compositional bias: low complexity.

It depends on Ca(2+) as a cofactor.

It localises to the cytoplasmic vesicle membrane. Its subcellular location is the cytoplasm. It is found in the cell cortex. The protein resides in the cell membrane. The protein localises to the cell projection. It localises to the ruffle. Its function is as follows. May be required for insulin-stimulated glucose transport and glucose transporter SLC2A4/GLUT4 translocation from intracellular glucose storage vesicle (GSV) to the plasma membrane (PM) in adipocytes. May bind phospholipid membranes in a calcium-dependent manner. The protein is C2 domain-containing protein 5 (c2cd5) of Xenopus tropicalis (Western clawed frog).